Here is a 476-residue protein sequence, read N- to C-terminus: Protein transport protein Sec61 subunit alpha isoform 1 (476 aa).

The Cytoplasmic segment spans residues 2–28; the sequence is AIKFLEVIKPFCVILPEIQKPERKIQF. A helical transmembrane segment spans residues 29–46; it reads KEKVLWTAITLFIFLVCC. The Lumenal segment spans residues 47–80; that stretch reads QIPLFGIMSSDSADPFYWMRVILASNRGTLMELG. The helical transmembrane segment at 81–97 threads the bilayer; it reads ISPIVTSGLIMQLLAGA. The Cytoplasmic segment spans residues 98–109; sequence KIIEVGDTPKDR. Residues 110-131 traverse the membrane as a helical segment; it reads ALFNGAQKLFGMIITIGQSIVY. The Lumenal segment spans residues 132-148; that stretch reads VMTGMYGDPSEMGAGIC. The chain crosses the membrane as a helical span at residues 149-167; the sequence is LLITIQLFVAGLIVLLLDE. The Cytoplasmic portion of the chain corresponds to 168–177; it reads LLQKGYGLGS. A helical membrane pass occupies residues 178–196; that stretch reads GISLFIATNICETIVWKAF. Residues 197-241 are Lumenal-facing; the sequence is SPTTVNTGRGMEFEGAIIALFHLLATRTDKVRALREAFYRQNLPN. Residues 242-259 traverse the membrane as a helical segment; the sequence is LMNLIATIFVFAVVIYFQ. At 260–285 the chain is on the cytoplasmic side; that stretch reads GFRVDLPIKSARYRGQYNTYPIKLFY. A helical membrane pass occupies residues 286-306; sequence TSNIPIILQSALVSNLYVISQ. Residues 307–356 are Lumenal-facing; sequence MLSARFSGNLLVSLLGTWSDTSSGGPARAYPVGGLCHYLSPPESFGSVLE. Residues 357 to 379 form a helical membrane-spanning segment; it reads DPVHAVVYIVFMLGSCAFFSKTW. The Cytoplasmic segment spans residues 380–420; it reads IEVSGSSAKDVAKQLKEQQMVMRGHRETSMVHELNRYIPTA. A helical transmembrane segment spans residues 421–437; sequence AAFGGLCIGALSVLADF. Over 438–443 the chain is Lumenal; sequence LGAIGS. A helical membrane pass occupies residues 444–458; the sequence is GTGILLAVTIIYQYF. Topologically, residues 459–476 are cytoplasmic; that stretch reads EIFVKEQSEVGSMGALLF.

The protein belongs to the SecY/SEC61-alpha family. The SEC61 channel-forming translocon complex consists of channel-forming core components SEC61A1, SEC61B and SEC61G and different auxiliary components such as SEC62 and SEC63. The SEC61 channel associates with the multi-pass translocon (MPT) complex.

The protein localises to the endoplasmic reticulum membrane. Its function is as follows. Component of SEC61 channel-forming translocon complex that mediates transport of signal peptide-containing precursor polypeptides across the endoplasmic reticulum (ER). Forms a ribosome receptor and a gated pore in the ER membrane, both functions required for cotranslational translocation of nascent polypeptides. May cooperate with auxiliary protein SEC62, SEC63 and HSPA5/BiP to enable post-translational transport of small presecretory proteins. The SEC61 channel is also involved in ER membrane insertion of transmembrane proteins: it mediates membrane insertion of the first few transmembrane segments of proteins, while insertion of subsequent transmembrane regions of multi-pass membrane proteins is mediated by the multi-pass translocon (MPT) complex. The SEC61 channel cooperates with the translocating protein TRAM1 to import nascent proteins into the ER. Controls the passive efflux of calcium ions from the ER lumen to the cytosol through SEC61 channel, contributing to the maintenance of cellular calcium homeostasis. Plays a critical role in nephrogenesis, specifically at pronephros stage. In Canis lupus familiaris (Dog), this protein is Protein transport protein Sec61 subunit alpha isoform 1 (SEC61A1).